The primary structure comprises 221 residues: Arginine ABC transporter permease protein ArtQ (221 aa).

In terms of domain architecture, ABC transmembrane type-1 spans 13-206 (ALMTLGLAVC…AVTLISQVGI (194 aa)). A run of 5 helical transmembrane segments spans residues 17–37 (LGLA…FAVL), 49–69 (VFVA…VYFG), 82–102 (IEFG…AAYA), 121–141 (GAAL…PQVW), and 186–206 (TWYG…QVGI).

Belongs to the binding-protein-dependent transport system permease family. HisMQ subfamily. As to quaternary structure, the complex is composed of two ATP-binding proteins (ArtP), two transmembrane proteins (ArtM and ArtQ) and a solute-binding protein (ArtI).

It is found in the cell inner membrane. Part of the ABC transporter complex ArtPIQM involved in arginine transport. Probably responsible for the translocation of the substrate across the membrane. This chain is Arginine ABC transporter permease protein ArtQ (artQ), found in Haemophilus influenzae (strain ATCC 51907 / DSM 11121 / KW20 / Rd).